The sequence spans 240 residues: MMDLFETNSYFFYLDGDNGAFQQLGVADGSPVYPGSEGTLSPCRDQLPVDAGSDRSEEEHVLAPPGLQPHCPGQCLIWACKTCKRKSAPTDRRKAATLRERRRLKKINEAFEALKRRTVANPNQRLPKVEILRSAINYIERLQDLLHSLDQQDKPQKADEEPFSYNSKEAPVQSEDFLSTCHPEWHHIPDHSRMPNLNIKEEGSLQENSSSSLQCLSSIVDSISSDEPRHPCTIQELVEN.

The bHLH domain occupies 91–142; that stretch reads DRRKAATLRERRRLKKINEAFEALKRRTVANPNQRLPKVEILRSAINYIERL.

In terms of assembly, efficient DNA binding requires dimerization with another bHLH protein. In terms of tissue distribution, skeletal muscle.

Its subcellular location is the nucleus. Involved in muscle differentiation (myogenic factor). Induces fibroblasts to differentiate into myoblasts. Probable sequence specific DNA-binding protein. This chain is Myogenic factor 6 (myf6), found in Xenopus laevis (African clawed frog).